Here is a 511-residue protein sequence, read N- to C-terminus: Histidine ammonia-lyase (511 aa).

The segment at residues A142 to G144 is a cross-link (5-imidazolinone (Ala-Gly)). Residue S143 is modified to 2,3-didehydroalanine (Ser).

This sequence belongs to the PAL/histidase family. Contains an active site 4-methylidene-imidazol-5-one (MIO), which is formed autocatalytically by cyclization and dehydration of residues Ala-Ser-Gly.

The protein localises to the cytoplasm. It carries out the reaction L-histidine = trans-urocanate + NH4(+). It functions in the pathway amino-acid degradation; L-histidine degradation into L-glutamate; N-formimidoyl-L-glutamate from L-histidine: step 1/3. This Brucella suis (strain ATCC 23445 / NCTC 10510) protein is Histidine ammonia-lyase.